Consider the following 306-residue polypeptide: Protein SEC13 homolog (306 aa).

6 WD repeats span residues 11 to 50 (QHRDAIHDAQLNIYGNRLATCGSDRLVKIFEVRPNGQSYP), 56 to 97 (GHNG…WQKT), 102 to 143 (THEA…QQWQ), 150 to 195 (CHDQ…NEWT), 202 to 245 (CHKD…TAEW), and 252 to 291 (QAPCALYHASFSPCGSFLSVSGDDNMITLWRENLQGQWIK).

It belongs to the WD repeat SEC13 family. In terms of assembly, probably part of the GATOR complex.

Its subcellular location is the cytoplasmic vesicle. The protein localises to the COPII-coated vesicle membrane. It localises to the endoplasmic reticulum membrane. It is found in the nucleus. The protein resides in the nuclear pore complex. Its subcellular location is the lysosome membrane. Its function is as follows. Functions as a component of the nuclear pore complex (NPC) and the COPII coat. Functionally, as a component of the GATOR complex may function in the amino acid-sensing branch of the TORC1 signaling pathway. This chain is Protein SEC13 homolog, found in Caenorhabditis briggsae.